Consider the following 173-residue polypeptide: MSLSKMSMSGMSGMGMGSSSNSSAATCRMSMLWNWYIHDSCFLAKSWHINTGNKFAGSIIGIFFFAVAIEGLSLVQRMFDRWIVAHSNGKTLSGPLRIFFPSSTVHVTVWQQLIRAAMYSSFYLSATILMLIVMSFNGYAILFGFVGAWIGFFLFASDTYGTPSTGTGCCESR.

The Extracellular segment spans residues 1-54 (MSLSKMSMSGMSGMGMGSSSNSSAATCRMSMLWNWYIHDSCFLAKSWHINTGNK). A helical transmembrane segment spans residues 55 to 75 (FAGSIIGIFFFAVAIEGLSLV). The Cytoplasmic segment spans residues 76–135 (QRMFDRWIVAHSNGKTLSGPLRIFFPSSTVHVTVWQQLIRAAMYSSFYLSATILMLIVMS). The helical transmembrane segment at 136 to 156 (FNGYAILFGFVGAWIGFFLFA) threads the bilayer. Residues 157–173 (SDTYGTPSTGTGCCESR) lie on the Extracellular side of the membrane.

This sequence belongs to the copper transporter (Ctr) (TC 1.A.56) family. SLC31A subfamily. Interacts with ctr4.

It localises to the membrane. Its function is as follows. Required for high affinity copper (probably reduced Cu I) transport into the cell. This is Copper transport protein ctr5 (ctr5) from Schizosaccharomyces pombe (strain 972 / ATCC 24843) (Fission yeast).